The primary structure comprises 907 residues: TBC1 domain family member 30 (907 aa).

Positions 51-74 (ASETQDNGNKSGGDEIDVSLCDSQ) are disordered. A Rab-GAP TBC domain is found at 243 to 451 (GIPKEWRKRV…KIWDSVFFEG (209 aa)). Residues 583–645 (QKQIKDQKEE…QQYSRIKKRQ (63 aa)) adopt a coiled-coil conformation. Disordered stretches follow at residues 731 to 781 (AKGE…LDRT), 812 to 859 (ELSP…SPFP), and 872 to 907 (NLGL…SKKR). Basic and acidic residues predominate over residues 749–762 (EVPKDQPDTSKETE). Residues 831–843 (ESQSDSHSSSSES) show a composition bias toward low complexity. The span at 892 to 907 (KTFNKAANGTTGSKKR) shows a compositional bias: polar residues.

In terms of biological role, may act as a GTPase-activating protein for Rab family protein(s). The chain is TBC1 domain family member 30 (tbc1d30) from Xenopus tropicalis (Western clawed frog).